A 460-amino-acid chain; its full sequence is MIEKCIGAHRFRRLQRFMRQGKVTILCLVLTVIVLRGTIGAGKFGTPEKDIEEIREHFFYTRKRGEPHRVLVEVSSKTTSSEDGGNGGNSYETFDINKLFVDEGDEEKSRDRTNKPYSLGPKISDWDEQRRDWLKQNPSFPNFVAPNKPRVLLVTGSAPKPCENPVGDHYLLKSIKNKIDYCRIHGIEIFYNMALLDAEMAGFWAKLPLIRKLLLSHPEIEFLWWMDSDAMFTDMVFELPWERYKDYNLVMHGWNEMVYDQKNWIGLNTGSFLLRNSQWSLDLLDAWAPMGPKGKIREEAGKVLTRELKDRPAFEADDQSAMVYLLATEREKWGGKVYLESGYYLHGYWGILVDRYEEMIENHKPGFGDHRWPLVTHFVGCKPCGKFGDYPVERCLRQMDRAFNFGDNQILQMYGFTHKSLGSRRVKPTRNQTDRPLDAKDEFGLLHPPFKAAKLSTTTT.

Residues 1–20 lie on the Cytoplasmic side of the membrane; the sequence is MIEKCIGAHRFRRLQRFMRQ. The chain crosses the membrane as a helical; Signal-anchor for type II membrane protein span at residues 21-40; sequence GKVTILCLVLTVIVLRGTIG. The Lumenal portion of the chain corresponds to 41 to 460; it reads AGKFGTPEKD…KAAKLSTTTT (420 aa). UDP-alpha-D-xylose-binding positions include G156 and 227-229; that span reads DSD. Positions 227 and 229 each coordinate Mn(2+). Substrate is bound at residue H346. Residues H377, G380, and K382 each coordinate UDP-alpha-D-xylose. Position 377 (H377) interacts with Mn(2+). Residues K382 and 389 to 390 contribute to the substrate site; that span reads DY. An N-linked (GlcNAc...) asparagine glycan is attached at N431.

This sequence belongs to the glycosyltransferase 34 family. As to quaternary structure, forms homodimer. Interacts with XXT2. Mn(2+) serves as cofactor.

Its subcellular location is the golgi apparatus membrane. The enzyme catalyses Transfers an alpha-D-xylosyl residue from UDP-D-xylose to a glucose residue in xyloglucan, forming an alpha-(1-&gt;6)-D-xylosyl-D-glucose linkage.. It functions in the pathway protein modification; protein glycosylation. Xylosyltransferase specific to UDP-D-xylose that accepts both cellopentaose and cellohexaose as substrates, with a better use of cellohexaose, to produce xyloglucan. Adds preferentially the first xylosyl residue to the fourth glucosyl residue from the reducing end of both acceptors. Transfer one xylose mainly to the second glucose residue from the non-reducing end. The acceptor should have a minimum of four glucose residues. This chain is Xyloglucan 6-xylosyltransferase 1, found in Arabidopsis thaliana (Mouse-ear cress).